Consider the following 382-residue polypeptide: Mucosal addressin cell adhesion molecule 1 (382 aa).

The signal sequence occupies residues 1–18; it reads MDFGLALLLAGLLGLLLG. Residues 19 to 317 are Extracellular-facing; that stretch reads QSLQVKPLQV…TGSSKPAGDQ (299 aa). 2 Ig-like domains span residues 23-112 and 113-231; these read VKPL…LLVY and AFPD…TSPE. Disulfide bonds link Cys47-Cys94, Cys51-Cys98, and Cys134-Cys204. The N-linked (GlcNAc...) asparagine glycan is linked to Asn83. The segment at 223 to 314 is disordered; sequence VLHSPTSPEP…VIPTGSSKPA (92 aa). The mucin-like stretch occupies residues 226-317; the sequence is SPTSPEPPDT…TGSSKPAGDQ (92 aa). Residues 228–231 form a 1; truncated repeat; the sequence is TSPE. Positions 228 to 271 are 5.5 X 8 AA tandem repeats of [PS]-P-D-T-T-S-[QP]-E; sequence TSPEPPDTTSPESPDTTSPESPDTTSQEPPDTTSPEPPDKTSPE. Tandem repeats lie at residues 232 to 239, 240 to 247, 248 to 255, 256 to 263, and 264 to 271. Residues 236–261 show a composition bias toward low complexity; that stretch reads TSPESPDTTSPESPDTTSQEPPDTTS. Positions 277–288 are enriched in low complexity; sequence GSTHTPRSPGST. The helical transmembrane segment at 318-338 threads the bilayer; it reads LPAALWTSSAVLGLLLLALPT. Topologically, residues 339-382 are cytoplasmic; it reads YHLWKRCRHLAEDDTHPPASLRLLPQVSAWAGLRGTGQVGISPS.

Homodimer. The Ser/Thr-rich mucin-like domain may provide possible sites for O-glycosylation. In terms of tissue distribution, highly expressed on high endothelial venules (HEV) and lamina propia venules found in the small intestine, and to a lesser extent in the colon and spleen. Very low levels of expression found in pancreas and brain. Not expressed in the thymus, prostate, ovaries, testis, heart, placenta, lung, liver, skeletal muscle, kidney or peripheral blood leukocytes.

The protein localises to the membrane. Its function is as follows. Cell adhesion leukocyte receptor expressed by mucosal venules, helps to direct lymphocyte traffic into mucosal tissues including the Peyer patches and the intestinal lamina propria. It can bind both integrin alpha-4/beta-7 and L-selectin, regulating both the passage and retention of leukocytes. Isoform 2, lacking the mucin-like domain, may be specialized in supporting integrin alpha-4/beta-7-dependent adhesion strengthening, independent of L-selectin binding. The polypeptide is Mucosal addressin cell adhesion molecule 1 (MADCAM1) (Homo sapiens (Human)).